We begin with the raw amino-acid sequence, 348 residues long: F(420)H(2) dehydrogenase subunit H (348 aa).

8 helical membrane passes run 20–40 (GVVGLVLVGAIFLGAMGAVWL), 93–113 (IFMMSSVFLMLVAIPVGAVFI), 127–147 (ISVLYIEAMSAITIFGIFMIA), 172–192 (PLGITVVSVAIMTGSLNIVEI), 198–218 (LLWNIFLQPIGFIVFFIALMA), 259–279 (ILGSFLVALLFLGGWNVPAFV), 286–306 (GLIAPTGFFLLKTVLVLMTII), and 328–348 (LLPLSLLNLVWAVGLGLYLGA).

Belongs to the complex I subunit 1 family. As to quaternary structure, the FPO complex is composed of at least 13 different subunits. FpoA, FpoH, FpoJ, FpoK, FpoL, FpoM and FpoN proteins constitute the membrane sector of the complex.

The protein localises to the cell membrane. It carries out the reaction methanophenazine + reduced coenzyme F420-(gamma-L-Glu)(n) = dihydromethanophenazine + oxidized coenzyme F420-(gamma-L-Glu)(n) + H(+). In terms of biological role, component of the F(420)H(2) dehydrogenase (FPO complex) which is part of the energy-conserving F(420)H(2):heterodisulfide oxidoreductase system. The membrane-bound electron transfer system of the complex plays an important role in the metabolism of methylotrophic methanogens when the organisms grow on methanol or methylamines. Catalyzes the oxidation of methanophenazine to dihydromethanophenazine. It shuttles electrons from F(420)H(2), via FAD and iron-sulfur (Fe-S) centers, to methanophenazine (an electron carrier in the membrane). It couples the redox reaction to proton translocation (for every two electrons transferred, two hydrogen ions are translocated across the cytoplasmic membrane), and thus conserves the redox energy in a proton gradient. In Methanosarcina acetivorans (strain ATCC 35395 / DSM 2834 / JCM 12185 / C2A), this protein is F(420)H(2) dehydrogenase subunit H.